The sequence spans 282 residues: Phosphate import ATP-binding protein PstB (282 aa).

A compositionally biased stretch (polar residues) spans methionine 1–proline 25. The tract at residues methionine 1 to alanine 26 is disordered. Residues isoleucine 36–valine 277 form the ABC transporter domain. Glycine 68–serine 75 is a binding site for ATP.

Belongs to the ABC transporter superfamily. Phosphate importer (TC 3.A.1.7) family. The complex is composed of two ATP-binding proteins (PstB), two transmembrane proteins (PstC and PstA) and a solute-binding protein (PstS).

It is found in the cell inner membrane. It catalyses the reaction phosphate(out) + ATP + H2O = ADP + 2 phosphate(in) + H(+). Part of the ABC transporter complex PstSACB involved in phosphate import. Responsible for energy coupling to the transport system. The sequence is that of Phosphate import ATP-binding protein PstB from Rhodopirellula baltica (strain DSM 10527 / NCIMB 13988 / SH1).